The chain runs to 303 residues: MPKIITLMGPTASGKTALAIDLVQKHNCEIISVDSALIYRSMDIGTAKPSADELALAPHRLIDIRDPAESYSAADFRADALHEIEQILKAGKTPLLVGGTMMYFKALLEGLSPLPAADEALRAQIILEAEQRGWQDMHDELKRLDPVSSERIHPNDPQRLIRALEVCRISGKSMTELSQIKSEPLPYDVVQFAISPKDRKVLHISIEERFKLMLNQGFVDEVRALKKRSDLNLALPSMRCVGYRQCWQYLDGEFDYDTMVEKAIVATRQLAKRQLTWLRGWPELNWLESGVDSNLNTVLRHCR.

9-16 (GPTASGKT) lines the ATP pocket. 11–16 (TASGKT) is a binding site for substrate. 3 interaction with substrate tRNA regions span residues 34–37 (DSAL), 158–162 (QRLIR), and 239–244 (RCVGYR).

It belongs to the IPP transferase family. Monomer. Mg(2+) serves as cofactor.

It catalyses the reaction adenosine(37) in tRNA + dimethylallyl diphosphate = N(6)-dimethylallyladenosine(37) in tRNA + diphosphate. In terms of biological role, catalyzes the transfer of a dimethylallyl group onto the adenine at position 37 in tRNAs that read codons beginning with uridine, leading to the formation of N6-(dimethylallyl)adenosine (i(6)A). The polypeptide is tRNA dimethylallyltransferase 1 (Shewanella sediminis (strain HAW-EB3)).